A 113-amino-acid polypeptide reads, in one-letter code: U11-theraphotoxin-Hhn1g (113 aa).

Positions 1–21 are cleaved as a signal peptide; sequence MNTVRVTFLLVFVLAVSLGQA. Residues 22–74 constitute a propeptide that is removed on maturation; the sequence is DKDENRMEMQEKTEQGKSYLDFAENLLLQKLEELEAKLLEEDSEESRNSRQKR. The segment at 61–83 is disordered; sequence EEDSEESRNSRQKRCIGEGVPCD. 3 cysteine pairs are disulfide-bonded: Cys-75–Cys-90, Cys-82–Cys-95, and Cys-89–Cys-110.

The protein belongs to the neurotoxin 14 (magi-1) family. 01 (HNTX-16) subfamily. As to expression, expressed by the venom gland.

Its subcellular location is the secreted. Its function is as follows. Probable ion channel inhibitor. The chain is U11-theraphotoxin-Hhn1g from Cyriopagopus hainanus (Chinese bird spider).